A 609-amino-acid polypeptide reads, in one-letter code: Alpha-glycerophosphate oxidase (609 aa).

21 to 49 contacts FAD; it reads DLLVIGGGITGAGLTLQAAAAGMKVAVLE.

The protein belongs to the FAD-dependent glycerol-3-phosphate dehydrogenase family. It depends on FAD as a cofactor.

It is found in the cytoplasm. It catalyses the reaction sn-glycerol 3-phosphate + O2 = dihydroxyacetone phosphate + H2O2. This Lactococcus lactis subsp. lactis (strain IL1403) (Streptococcus lactis) protein is Alpha-glycerophosphate oxidase (glpO).